Reading from the N-terminus, the 77-residue chain is Acyl carrier protein (77 aa).

Positions 1 to 76 (MAIFDDVKKV…DVVNYIENLQ (76 aa)) constitute a Carrier domain. Ser-36 bears the O-(pantetheine 4'-phosphoryl)serine mark.

This sequence belongs to the acyl carrier protein (ACP) family. Post-translationally, 4'-phosphopantetheine is transferred from CoA to a specific serine of apo-ACP by AcpS. This modification is essential for activity because fatty acids are bound in thioester linkage to the sulfhydryl of the prosthetic group.

Its subcellular location is the cytoplasm. Its pathway is lipid metabolism; fatty acid biosynthesis. Its function is as follows. Carrier of the growing fatty acid chain in fatty acid biosynthesis. In Campylobacter lari (strain RM2100 / D67 / ATCC BAA-1060), this protein is Acyl carrier protein.